Consider the following 294-residue polypeptide: Probable 2-(5''-triphosphoribosyl)-3'-dephosphocoenzyme-A synthase (294 aa).

It belongs to the CitG/MdcB family.

The enzyme catalyses 3'-dephospho-CoA + ATP = 2'-(5''-triphospho-alpha-D-ribosyl)-3'-dephospho-CoA + adenine. This is Probable 2-(5''-triphosphoribosyl)-3'-dephosphocoenzyme-A synthase from Streptococcus pyogenes serotype M49 (strain NZ131).